The primary structure comprises 91 residues: Large ribosomal subunit protein uL23c (91 aa).

It belongs to the universal ribosomal protein uL23 family. As to quaternary structure, part of the 50S ribosomal subunit.

The protein resides in the plastid. It is found in the chloroplast. In terms of biological role, binds to 23S rRNA. In Picea abies (Norway spruce), this protein is Large ribosomal subunit protein uL23c (rpl23).